Consider the following 1337-residue polypeptide: Phosphoribosylformylglycinamidine synthase (1337 aa).

The residue at position 215 (S215) is a Phosphoserine. Residues 322–333 and 402–404 contribute to the ATP site; these read GATTGTGGRIRD and AGF. T619 and T622 each carry phosphothreonine. A705 is an ATP binding site. Mg(2+) contacts are provided by D706, E745, N749, and D908. S910 contributes to the ATP binding site. Residues 1063–1301 enclose the Glutamine amidotransferase type-1 domain; that stretch reads RVAILREEGS…ALMPHPERAV (239 aa). The active-site Nucleophile is the C1157. Active-site residues include H1296 and E1298.

It in the N-terminal section; belongs to the FGAMS family.

The protein localises to the cytoplasm. It carries out the reaction N(2)-formyl-N(1)-(5-phospho-beta-D-ribosyl)glycinamide + L-glutamine + ATP + H2O = 2-formamido-N(1)-(5-O-phospho-beta-D-ribosyl)acetamidine + L-glutamate + ADP + phosphate + H(+). It functions in the pathway purine metabolism; IMP biosynthesis via de novo pathway; 5-amino-1-(5-phospho-D-ribosyl)imidazole from N(2)-formyl-N(1)-(5-phospho-D-ribosyl)glycinamide: step 1/2. Its function is as follows. Phosphoribosylformylglycinamidine synthase involved in the purines biosynthetic pathway. Catalyzes the ATP-dependent conversion of formylglycinamide ribonucleotide (FGAR) and glutamine to yield formylglycinamidine ribonucleotide (FGAM) and glutamate. The polypeptide is Phosphoribosylformylglycinamidine synthase (Pfas) (Mus musculus (Mouse)).